The sequence spans 447 residues: Enolase (447 aa).

Q168 is a binding site for (2R)-2-phosphoglycerate. E210 serves as the catalytic Proton donor. The Mg(2+) site is built by D247, E292, and D319. (2R)-2-phosphoglycerate is bound by residues K344, R373, S374, and K395. The active-site Proton acceptor is K344.

Belongs to the enolase family. In terms of assembly, component of the RNA degradosome, a multiprotein complex involved in RNA processing and mRNA degradation. Requires Mg(2+) as cofactor.

It is found in the cytoplasm. Its subcellular location is the secreted. It localises to the cell surface. It catalyses the reaction (2R)-2-phosphoglycerate = phosphoenolpyruvate + H2O. It participates in carbohydrate degradation; glycolysis; pyruvate from D-glyceraldehyde 3-phosphate: step 4/5. Its function is as follows. Catalyzes the reversible conversion of 2-phosphoglycerate (2-PG) into phosphoenolpyruvate (PEP). It is essential for the degradation of carbohydrates via glycolysis. This Blochmanniella floridana protein is Enolase.